The primary structure comprises 386 residues: Succinate--CoA ligase [ADP-forming] subunit beta (386 aa).

The ATP-grasp domain occupies 9-244; sequence KEILHKFNVP…YDEEVKEEIE (236 aa). ATP is bound by residues Lys-46, 53 to 55, Glu-99, Ser-102, and Glu-107; that span reads GRG. Mg(2+)-binding residues include Asn-199 and Asp-213. Substrate-binding positions include Asn-264 and 321 to 323; that span reads GIM.

It belongs to the succinate/malate CoA ligase beta subunit family. Heterotetramer of two alpha and two beta subunits. Requires Mg(2+) as cofactor.

The enzyme catalyses succinate + ATP + CoA = succinyl-CoA + ADP + phosphate. It carries out the reaction GTP + succinate + CoA = succinyl-CoA + GDP + phosphate. The protein operates within carbohydrate metabolism; tricarboxylic acid cycle; succinate from succinyl-CoA (ligase route): step 1/1. In terms of biological role, succinyl-CoA synthetase functions in the citric acid cycle (TCA), coupling the hydrolysis of succinyl-CoA to the synthesis of either ATP or GTP and thus represents the only step of substrate-level phosphorylation in the TCA. The beta subunit provides nucleotide specificity of the enzyme and binds the substrate succinate, while the binding sites for coenzyme A and phosphate are found in the alpha subunit. In Wolbachia pipientis subsp. Culex pipiens (strain wPip), this protein is Succinate--CoA ligase [ADP-forming] subunit beta.